Here is a 459-residue protein sequence, read N- to C-terminus: DnaJ homolog subfamily A member 1 homolog (459 aa).

The 68-residue stretch at 6-73 folds into the J domain; the sequence is EYYERLGVKP…EKRKMYDSYG (68 aa). The segment at 158–243 adopts a CR-type zinc-finger fold; sequence GKLVKISISR…CKGKRVIQGK (86 aa). Positions 171, 174, 188, 191, 215, 218, 231, and 234 each coordinate Zn(2+). CXXCXGXG motif repeat units lie at residues 171-178, 188-195, 215-222, and 231-238; these read CKTCKGSG, CPTCNGSR, CHTCHGTG, and CKECKGKR. The disordered stretch occupies residues 405–459; it reads NTNEQSSHGGAGGAYQQHGGAYGHQKQQQQGFNPADFGAQFGGGGPQQAQQCQQQ. Residues 418-435 are compositionally biased toward low complexity; sequence AYQQHGGAYGHQKQQQQG. Position 456 is a cysteine methyl ester (cysteine 456). The S-farnesyl cysteine moiety is linked to residue cysteine 456. Residues 457–459 constitute a propeptide, removed in mature form; that stretch reads QQQ.

The protein localises to the membrane. It is found in the cytoplasm. The protein resides in the microsome. It localises to the mitochondrion. Its subcellular location is the nucleus. The protein localises to the perinuclear region. Co-chaperone for Hsp70 family members. Plays a role in protein transport into mitochondria and in the regulation of apoptosis via its role as co-chaperone. The polypeptide is DnaJ homolog subfamily A member 1 homolog (dnaja1) (Dictyostelium discoideum (Social amoeba)).